Here is a 126-residue protein sequence, read N- to C-terminus: Protein ApaG (126 aa).

One can recognise an ApaG domain in the interval 2–126 (ADKLYQMEVQ…MTLVAPRVLH (125 aa)).

The protein is Protein ApaG of Chromobacterium violaceum (strain ATCC 12472 / DSM 30191 / JCM 1249 / CCUG 213 / NBRC 12614 / NCIMB 9131 / NCTC 9757 / MK).